The chain runs to 578 residues: Poly(A) RNA polymerase cid13 (578 aa).

Mg(2+)-binding residues include D110 and D112. In terms of domain architecture, PAP-associated spans 275–330 (SLGILFVEFFRFFGYLFDYEHFVLSIRHGTFLSKRAKGWQFQLNNFLCVEEPFHTS). Residues 495–565 (SHHFDERHGG…SEVVSPVSLH (71 aa)) form a disordered region. The segment covering 496-510 (HHFDERHGGDRHEKN) has biased composition (basic and acidic residues). Residues 516–527 (RYSRNKFHKKKQ) show a composition bias toward basic residues. Residues 547–565 (NSPPSNSSSSEVVSPVSLH) show a composition bias toward low complexity.

The protein belongs to the DNA polymerase type-B-like family. Interacts with pab1. The cofactor is Mg(2+). Mn(2+) is required as a cofactor.

Its subcellular location is the cytoplasm. It is found in the nucleus. It carries out the reaction RNA(n) + ATP = RNA(n)-3'-adenine ribonucleotide + diphosphate. Its function is as follows. Polymerase that creates the 3' poly(A) tail of suc22 mRNA. The protein is Poly(A) RNA polymerase cid13 (cid13) of Schizosaccharomyces pombe (strain 972 / ATCC 24843) (Fission yeast).